The sequence spans 201 residues: Bradykinin potentiating and C-type natriuretic peptides (201 aa).

The N-terminal stretch at 1-23 (MFVSRLAASGLLLLALLAVSLDG) is a signal peptide. A propeptide spanning residues 24–47 (KPVQQWSQNWPGPKVPPLVVQQWS) is cleaved from the precursor. Q48 bears the Pyrrolidone carboxylic acid mark. A propeptide spanning residues 58 to 60 (LVV) is cleaved from the precursor. Pyrrolidone carboxylic acid is present on Q61. 2 consecutive propeptides follow at residues 67-95 (TQLQ…AALD) and 107-179 (GSKA…LAKK). The interval 90–172 (PDAALDTPPA…GGGGGGGARR (83 aa)) is disordered. Over residues 120 to 130 (SKGASATSTAS) the composition is skewed to low complexity. Residues 132 to 142 (PMRDLRTDGKQ) are compositionally biased toward basic and acidic residues. Residues 159-170 (PGGGGGGGGGGA) show a composition bias toward gly residues. C185 and C201 are disulfide-bonded.

The protein in the N-terminal section; belongs to the bradykinin-potentiating peptide family. It in the central section; belongs to the bradykinin inhibitor peptide family. In the C-terminal section; belongs to the natriuretic peptide family. As to expression, venom gland.

It localises to the secreted. Its function is as follows. Inhibits the activity of the angiotensin-converting enzyme (ACE) by a preferential interaction with its C-domain. May also potentiate the hypotensive effects of bradykinin. Functionally, antagonizes the vasodilatory actions of bradykinin at the B2 bradykinin receptor. In terms of biological role, has a vasorelaxant activity in rat aortic strips and a diuretic potency in anesthetized rats. May act by activating natriuretic receptors (NPR1 and/or NPR2). This Sistrurus catenatus edwardsii (Desert massasauga) protein is Bradykinin potentiating and C-type natriuretic peptides.